Consider the following 255-residue polypeptide: MASNDSIKKTLGVVVGLSLVCSIIVSTAAVGLRDQQKANAVLDKQSKIIEVAGIDSKGKKVPELFAQYIEPRLVDFATGDFVDGNAATYDQRKAAKDPAQSIKLTAEQDDAKILRRANTGVVYLVKNGDSISKIILPVHGNGLWSMMYAFVAVETDGNTVSGITYYEQGETPGLGGEVENPSWRAQFVGKKLFDENHKPAIKVVKGGAPVGSEHGVDGLSGATLTSNGVQHTFDFWLGDMGFGPFLAKVRDGGLN.

A helical membrane pass occupies residues 11–31; sequence LGVVVGLSLVCSIIVSTAAVG. Thr223 carries the post-translational modification FMN phosphoryl threonine.

This sequence belongs to the NqrC family. Composed of six subunits; NqrA, NqrB, NqrC, NqrD, NqrE and NqrF. The cofactor is FMN.

Its subcellular location is the cell inner membrane. It carries out the reaction a ubiquinone + n Na(+)(in) + NADH + H(+) = a ubiquinol + n Na(+)(out) + NAD(+). Functionally, NQR complex catalyzes the reduction of ubiquinone-1 to ubiquinol by two successive reactions, coupled with the transport of Na(+) ions from the cytoplasm to the periplasm. NqrA to NqrE are probably involved in the second step, the conversion of ubisemiquinone to ubiquinol. The chain is Na(+)-translocating NADH-quinone reductase subunit C from Vibrio vulnificus (strain CMCP6).